The chain runs to 290 residues: Ribosomal protein L11 methyltransferase (290 aa).

The S-adenosyl-L-methionine site is built by T136, G159, D181, and N228.

The protein belongs to the methyltransferase superfamily. PrmA family.

It is found in the cytoplasm. The catalysed reaction is L-lysyl-[protein] + 3 S-adenosyl-L-methionine = N(6),N(6),N(6)-trimethyl-L-lysyl-[protein] + 3 S-adenosyl-L-homocysteine + 3 H(+). Its function is as follows. Methylates ribosomal protein L11. This Allorhizobium ampelinum (strain ATCC BAA-846 / DSM 112012 / S4) (Agrobacterium vitis (strain S4)) protein is Ribosomal protein L11 methyltransferase.